The following is a 203-amino-acid chain: Holliday junction branch migration complex subunit RuvA (203 aa).

Residues 1 to 63 form a domain I region; the sequence is MIDYLRGTLT…EDVIRLYGFR (63 aa). Residues 64–142 are domain II; it reads TKEKRSLFEK…ELHPGLFSQK (79 aa). Residues 143-152 are flexible linker; sequence EEQPKPHEKN. Residues 153-203 form a domain III region; the sequence is DGNQALDEAMEALKALGYVEKELKKVKPKLEQETLTTDAYIKKALQLMLNR.

The protein belongs to the RuvA family. In terms of assembly, homotetramer. Forms an RuvA(8)-RuvB(12)-Holliday junction (HJ) complex. HJ DNA is sandwiched between 2 RuvA tetramers; dsDNA enters through RuvA and exits via RuvB. An RuvB hexamer assembles on each DNA strand where it exits the tetramer. Each RuvB hexamer is contacted by two RuvA subunits (via domain III) on 2 adjacent RuvB subunits; this complex drives branch migration. In the full resolvosome a probable DNA-RuvA(4)-RuvB(12)-RuvC(2) complex forms which resolves the HJ.

It localises to the cytoplasm. Functionally, the RuvA-RuvB-RuvC complex processes Holliday junction (HJ) DNA during genetic recombination and DNA repair, while the RuvA-RuvB complex plays an important role in the rescue of blocked DNA replication forks via replication fork reversal (RFR). RuvA specifically binds to HJ cruciform DNA, conferring on it an open structure. The RuvB hexamer acts as an ATP-dependent pump, pulling dsDNA into and through the RuvAB complex. HJ branch migration allows RuvC to scan DNA until it finds its consensus sequence, where it cleaves and resolves the cruciform DNA. This chain is Holliday junction branch migration complex subunit RuvA, found in Halalkalibacterium halodurans (strain ATCC BAA-125 / DSM 18197 / FERM 7344 / JCM 9153 / C-125) (Bacillus halodurans).